The sequence spans 202 residues: Peptide deformylase (202 aa).

The Fe cation site is built by Cys-121 and His-163. Glu-164 is an active-site residue. His-167 is a Fe cation binding site.

This sequence belongs to the polypeptide deformylase family. Fe(2+) is required as a cofactor.

The catalysed reaction is N-terminal N-formyl-L-methionyl-[peptide] + H2O = N-terminal L-methionyl-[peptide] + formate. Removes the formyl group from the N-terminal Met of newly synthesized proteins. Requires at least a dipeptide for an efficient rate of reaction. N-terminal L-methionine is a prerequisite for activity but the enzyme has broad specificity at other positions. The polypeptide is Peptide deformylase (Synechococcus sp. (strain CC9311)).